The following is a 257-amino-acid chain: tRNA (cytidine/uridine/adenosine-2'-O-)-methyltransferase TrmJ (257 aa).

S-adenosyl-L-methionine contacts are provided by residues 79–82, 115–117, I135, and 142–144; these read TSAR, GRE, and GSL.

The protein belongs to the class IV-like SAM-binding methyltransferase superfamily. RNA methyltransferase TrmH family. As to quaternary structure, homodimer.

It is found in the cytoplasm. It catalyses the reaction cytidine(32) in tRNA + S-adenosyl-L-methionine = 2'-O-methylcytidine(32) in tRNA + S-adenosyl-L-homocysteine + H(+). The enzyme catalyses uridine(32) in tRNA + S-adenosyl-L-methionine = 2'-O-methyluridine(32) in tRNA + S-adenosyl-L-homocysteine + H(+). The catalysed reaction is adenosine(32) in tRNA + S-adenosyl-L-methionine = 2'-O-methyladenosine(32) in tRNA + S-adenosyl-L-homocysteine + H(+). Functionally, catalyzes the formation of 2'O-methylated cytidine (Cm32), 2'O-methylated uridine (Um32) or 2'O-methylated adenosine (Am32) at position 32 in tRNA. Confers resistance to oxidative stress. The protein is tRNA (cytidine/uridine/adenosine-2'-O-)-methyltransferase TrmJ of Pseudomonas aeruginosa (strain UCBPP-PA14).